The following is a 146-amino-acid chain: D-aminoacyl-tRNA deacylase (146 aa).

Positions 137–138 (GP) match the Gly-cisPro motif, important for rejection of L-amino acids motif.

The protein belongs to the DTD family. Homodimer.

The protein resides in the cytoplasm. It carries out the reaction glycyl-tRNA(Ala) + H2O = tRNA(Ala) + glycine + H(+). The enzyme catalyses a D-aminoacyl-tRNA + H2O = a tRNA + a D-alpha-amino acid + H(+). An aminoacyl-tRNA editing enzyme that deacylates mischarged D-aminoacyl-tRNAs. Also deacylates mischarged glycyl-tRNA(Ala), protecting cells against glycine mischarging by AlaRS. Acts via tRNA-based rather than protein-based catalysis; rejects L-amino acids rather than detecting D-amino acids in the active site. By recycling D-aminoacyl-tRNA to D-amino acids and free tRNA molecules, this enzyme counteracts the toxicity associated with the formation of D-aminoacyl-tRNA entities in vivo and helps enforce protein L-homochirality. The chain is D-aminoacyl-tRNA deacylase from Bacillus cereus (strain Q1).